The sequence spans 359 residues: Protein Wnt-8a (359 aa).

The N-terminal stretch at 1–25 is a signal peptide; that stretch reads MNPCQIFASLVMSICCHILSSTAWS. Cys-55 and Cys-66 are oxidised to a cystine. Asn-104 carries N-linked (GlcNAc...) asparagine glycosylation. Cystine bridges form between Cys-105-Cys-113, Cys-115-Cys-133, Cys-181-Cys-195, Cys-183-Cys-190, Cys-260-Cys-298, Cys-276-Cys-291, Cys-295-Cys-337, Cys-313-Cys-328, Cys-315-Cys-325, and Cys-320-Cys-321. Ser-187 carries O-palmitoleoyl serine lipidation. Asn-263 and Asn-282 each carry an N-linked (GlcNAc...) asparagine glycan. Asn-348 carries N-linked (GlcNAc...) asparagine glycosylation.

This sequence belongs to the Wnt family. Post-translationally, palmitoleoylation is required for efficient binding to frizzled receptors. Depalmitoleoylation leads to Wnt signaling pathway inhibition. Proteolytic processing by tiki1 and tiki2 promotes oxidation and formation of large disulfide-bond oligomers, leading to inactivation of wnt8. In terms of tissue distribution, expressed in the margin of the pregastrula embryo destined to be the future mesoderm.

The protein resides in the secreted. The protein localises to the extracellular space. It localises to the extracellular matrix. Functionally, ligand for members of the frizzled family of seven transmembrane receptors. Required for mesoderm and neural ectoderm patterning during gastrulation. Involved in axis formation during embryonic development, via activation of canonical Wnt/CTNNB1 signaling. May be involved in the specification of the spatial patterns of expression of Gsc and other regulatory genes leading to the establishment of the embryonic axis. This chain is Protein Wnt-8a (wnt8a), found in Danio rerio (Zebrafish).